The primary structure comprises 96 residues: Co-chaperonin GroES (96 aa).

The protein belongs to the GroES chaperonin family. Heptamer of 7 subunits arranged in a ring. Interacts with the chaperonin GroEL.

It localises to the cytoplasm. Together with the chaperonin GroEL, plays an essential role in assisting protein folding. The GroEL-GroES system forms a nano-cage that allows encapsulation of the non-native substrate proteins and provides a physical environment optimized to promote and accelerate protein folding. GroES binds to the apical surface of the GroEL ring, thereby capping the opening of the GroEL channel. The chain is Co-chaperonin GroES from Buchnera aphidicola subsp. Schizaphis graminum (strain Sg).